A 130-amino-acid polypeptide reads, in one-letter code: Sulfurtransferase TusD (130 aa).

Cys80 (cysteine persulfide intermediate) is an active-site residue.

The protein belongs to the DsrE/TusD family. Heterohexamer, formed by a dimer of trimers. The hexameric TusBCD complex contains 2 copies each of TusB, TusC and TusD. The TusBCD complex interacts with TusE.

The protein resides in the cytoplasm. Its function is as follows. Part of a sulfur-relay system required for 2-thiolation of 5-methylaminomethyl-2-thiouridine (mnm(5)s(2)U) at tRNA wobble positions. Accepts sulfur from TusA and transfers it in turn to TusE. This is Sulfurtransferase TusD from Proteus mirabilis (strain HI4320).